The sequence spans 382 residues: UDP-4-amino-4-deoxy-L-arabinose--oxoglutarate aminotransferase (382 aa).

The residue at position 182 (Lys-182) is an N6-(pyridoxal phosphate)lysine.

The protein belongs to the DegT/DnrJ/EryC1 family. ArnB subfamily. In terms of assembly, homodimer. Pyridoxal 5'-phosphate serves as cofactor.

It carries out the reaction UDP-4-amino-4-deoxy-beta-L-arabinose + 2-oxoglutarate = UDP-beta-L-threo-pentopyranos-4-ulose + L-glutamate. It participates in nucleotide-sugar biosynthesis; UDP-4-deoxy-4-formamido-beta-L-arabinose biosynthesis; UDP-4-deoxy-4-formamido-beta-L-arabinose from UDP-alpha-D-glucuronate: step 2/3. The protein operates within bacterial outer membrane biogenesis; lipopolysaccharide biosynthesis. Its function is as follows. Catalyzes the conversion of UDP-4-keto-arabinose (UDP-Ara4O) to UDP-4-amino-4-deoxy-L-arabinose (UDP-L-Ara4N). The modified arabinose is attached to lipid A and is required for resistance to polymyxin and cationic antimicrobial peptides. The protein is UDP-4-amino-4-deoxy-L-arabinose--oxoglutarate aminotransferase of Pectobacterium carotovorum subsp. carotovorum (strain PC1).